A 91-amino-acid chain; its full sequence is Acyl carrier protein AsbD (91 aa).

The Carrier domain maps to E4 to Q82. The residue at position 40 (S40) is an O-(pantetheine 4'-phosphoryl)serine.

This sequence belongs to the acyl carrier protein (ACP) family. In terms of processing, activated by the transfer of a 4'-phosphopantetheine group from CoA to Ser-40.

It participates in siderophore biosynthesis; petrobactin biosynthesis. In terms of biological role, involved in the biosynthesis of petrobactin, a catecholate siderophore that functions in both iron acquisition and virulence. Aryl-carrier protein that activates 3,4-dihydroxybenzoate (3,4-DHBA) prior to its incorporation into petrobactin. The polypeptide is Acyl carrier protein AsbD (Bacillus anthracis).